Reading from the N-terminus, the 100-residue chain is Urease subunit gamma (100 aa).

The protein belongs to the urease gamma subunit family. As to quaternary structure, heterotrimer of UreA (gamma), UreB (beta) and UreC (alpha) subunits. Three heterotrimers associate to form the active enzyme.

It is found in the cytoplasm. It catalyses the reaction urea + 2 H2O + H(+) = hydrogencarbonate + 2 NH4(+). Its pathway is nitrogen metabolism; urea degradation; CO(2) and NH(3) from urea (urease route): step 1/1. The sequence is that of Urease subunit gamma from Opitutus terrae (strain DSM 11246 / JCM 15787 / PB90-1).